The sequence spans 937 residues: AP-2 complex subunit beta (937 aa).

Residue threonine 2 is modified to N-acetylthreonine. Serine 4 is subject to Phosphoserine. The residue at position 265 (lysine 265) is an N6-acetyllysine. Position 737 is a phosphotyrosine; by SRC (tyrosine 737). An interaction with ARRB1 region spans residues 841-937; the sequence is WKDIPNENEL…YQVYDSILKN (97 aa). A Phosphotyrosine modification is found at tyrosine 928.

It belongs to the adaptor complexes large subunit family. Adaptor protein complex 2 (AP-2) is a heterotetramer composed of two large adaptins (alpha-type subunit AP2A1 or AP2A2 and beta-type subunit AP2B1), a medium adaptin (mu-type subunit AP2M1) and a small adaptin (sigma-type subunit AP2S1). Interacts with EPN1. Interacts with EPS15; clathrin competes with EPS15. Interacts with SNAP91; clathrin competes with SNAP91. Interacts with CLTC; clathrin competes with EPS15, SNAP91 and PIP5K1C. Interacts with LDLRAP1. Interacts with AMPH and BIN1. Interacts with ARF6 (GDP-bound). Interacts (dephosphorylated at Tyr-737) with ARRB1; phosphorylation of AP2B1 at Tyr-737 disrupts the interaction. Interacts with SLC2A8. Interacts with SCYL1 and SCYL2. Interacts with TGFBR1 and TGFBR2. Interacts with PIP5K1C; clathrin competes with PIP5K1C. Interacts with DENND1B, but not with DENND1A, nor DENND1C. Interacts with FCHO1. Interacts with RFTN1. Interacts with KIAA1107. Together with AP2A1 or AP2A2 and AP2M1, it interacts with ADAM10; this interaction facilitates ADAM10 endocytosis from the plasma membrane during long-term potentiation in hippocampal neurons. In terms of processing, phosphorylation at Tyr-737 by SRC occurs at the plasma membrane in clathrin-coated vesicles (CCVs). Expressed in the brain (at protein level).

Its subcellular location is the cell membrane. It localises to the membrane. The protein localises to the coated pit. In terms of biological role, component of the adaptor protein complex 2 (AP-2). Adaptor protein complexes function in protein transport via transport vesicles in different membrane traffic pathways. Adaptor protein complexes are vesicle coat components and appear to be involved in cargo selection and vesicle formation. AP-2 is involved in clathrin-dependent endocytosis in which cargo proteins are incorporated into vesicles surrounded by clathrin (clathrin-coated vesicles, CCVs) which are destined for fusion with the early endosome. The clathrin lattice serves as a mechanical scaffold but is itself unable to bind directly to membrane components. Clathrin-associated adaptor protein (AP) complexes which can bind directly to both the clathrin lattice and to the lipid and protein components of membranes are considered to be the major clathrin adaptors contributing the CCV formation. AP-2 also serves as a cargo receptor to selectively sort the membrane proteins involved in receptor-mediated endocytosis. AP-2 seems to play a role in the recycling of synaptic vesicle membranes from the presynaptic surface. AP-2 recognizes Y-X-X-[FILMV] (Y-X-X-Phi) and [ED]-X-X-X-L-[LI] endocytosis signal motifs within the cytosolic tails of transmembrane cargo molecules. AP-2 may also play a role in maintaining normal post-endocytic trafficking through the ARF6-regulated, non-clathrin pathway. During long-term potentiation in hippocampal neurons, AP-2 is responsible for the endocytosis of ADAM10. The AP-2 beta subunit acts via its C-terminal appendage domain as a scaffolding platform for endocytic accessory proteins; at least some clathrin-associated sorting proteins (CLASPs) are recognized by their [DE]-X(1,2)-F-X-X-[FL]-X-X-X-R motif. The AP-2 beta subunit binds to clathrin heavy chain, promoting clathrin lattice assembly; clathrin displaces at least some CLASPs from AP2B1 which probably then can be positioned for further coat assembly. This is AP-2 complex subunit beta (AP2B1) from Homo sapiens (Human).